The following is a 229-amino-acid chain: Potassium/proton antiporter CemA (229 aa).

Helical transmembrane passes span 7 to 27 (LTPF…SLSF), 106 to 126 (LILH…YSIL), and 193 to 213 (LVST…FLFL).

Belongs to the CemA family.

Its subcellular location is the plastid. The protein resides in the chloroplast inner membrane. The enzyme catalyses K(+)(in) + H(+)(out) = K(+)(out) + H(+)(in). In terms of biological role, contributes to K(+)/H(+) antiport activity by supporting proton efflux to control proton extrusion and homeostasis in chloroplasts in a light-dependent manner to modulate photosynthesis. Prevents excessive induction of non-photochemical quenching (NPQ) under continuous-light conditions. Indirectly promotes efficient inorganic carbon uptake into chloroplasts. The chain is Potassium/proton antiporter CemA from Illicium oligandrum (Star anise).